The sequence spans 539 residues: Interleukin-2 receptor subunit beta (539 aa).

A signal peptide spans 1–26 (MATIALPWSLSLYVFLLLLATPWASA). At 27–240 (AVKNCSHLEC…RTRPADPMKE (214 aa)) the chain is on the extracellular side. Residues Asn-30, Asn-43, Asn-55, and Asn-71 are each glycosylated (N-linked (GlcNAc...) asparagine). A disulfide bridge connects residues Cys-36 and Cys-46. Cys-74 and Cys-86 are oxidised to a cystine. The Fibronectin type-III domain occupies 135–235 (APHSLQVLHI…QPLTFRTRPA (101 aa)). 2 N-linked (GlcNAc...) asparagine glycosylation sites follow: Asn-150 and Asn-216. The WSXWS motif motif lies at 221-225 (WSPWS). The chain crosses the membrane as a helical span at residues 241–268 (ILPMSWLRYLLLVLGCFSGFFSCVYILV). Residues 269-539 (KCRYLGPWLK…LQAQDSVHLI (271 aa)) lie on the Cytoplasmic side of the membrane. A Box 1 motif motif is present at residues 281-289 (LKCHIPDPS). 3 disordered regions span residues 395-419 (VEEDGSRLPEGSPHPPLLPLAGEQD), 440-465 (PNTAYGGSRAPEERSPLSLHEGLPSL), and 477-516 (LERMPEGDGEGLSANSSGEQASVPEGNLHGQDQDRGQGPI).

The protein belongs to the type I cytokine receptor family. Type 4 subfamily. As to quaternary structure, non-covalent dimer of an alpha and a beta subunit. IL2R exists in 3 different forms: a high affinity dimer, an intermediate affinity monomer (beta subunit), and a low affinity monomer (alpha subunit). The high and intermediate affinity forms also associate with a gamma subunit. Interacts with SHB upon interleukin stimulation.

It is found in the cell membrane. The protein resides in the cell surface. Its function is as follows. Receptor for interleukin-2. This beta subunit is involved in receptor mediated endocytosis and transduces the mitogenic signals of IL2. Probably in association with IL15RA, involved in the stimulation of neutrophil phagocytosis by IL15. This chain is Interleukin-2 receptor subunit beta (Il2rb), found in Mus musculus (Mouse).